The sequence spans 151 residues: NADPH-dependent 7-cyano-7-deazaguanine reductase (151 aa).

Cys51 serves as the catalytic Thioimide intermediate. The active-site Proton donor is Asp58. Substrate contacts are provided by residues 73–75 and 92–93; these read VES and HE.

Belongs to the GTP cyclohydrolase I family. QueF type 1 subfamily.

It is found in the cytoplasm. The catalysed reaction is 7-aminomethyl-7-carbaguanine + 2 NADP(+) = 7-cyano-7-deazaguanine + 2 NADPH + 3 H(+). It functions in the pathway tRNA modification; tRNA-queuosine biosynthesis. Catalyzes the NADPH-dependent reduction of 7-cyano-7-deazaguanine (preQ0) to 7-aminomethyl-7-deazaguanine (preQ1). This is NADPH-dependent 7-cyano-7-deazaguanine reductase from Bacteroides fragilis (strain ATCC 25285 / DSM 2151 / CCUG 4856 / JCM 11019 / LMG 10263 / NCTC 9343 / Onslow / VPI 2553 / EN-2).